The following is a 146-amino-acid chain: Ribonuclease H (146 aa).

Residues 1 to 143 enclose the RNase H type-1 domain; that stretch reads MQKKVTIYTD…CDYLATQAIK (143 aa). Residues aspartate 10, glutamate 48, aspartate 70, and aspartate 135 each coordinate Mg(2+).

This sequence belongs to the RNase H family. In terms of assembly, monomer. Mg(2+) is required as a cofactor.

The protein localises to the cytoplasm. The enzyme catalyses Endonucleolytic cleavage to 5'-phosphomonoester.. Endonuclease that specifically degrades the RNA of RNA-DNA hybrids. This chain is Ribonuclease H, found in Chlorobium phaeobacteroides (strain BS1).